We begin with the raw amino-acid sequence, 102 residues long: N(4)-acetylcytidine amidohydrolase (102 aa).

The 87-residue stretch at 6–92 (TFFGRFEADI…VIKAIYPGLD (87 aa)) folds into the ASCH domain. Lysine 20 serves as the catalytic Proton acceptor. Threonine 23 functions as the Nucleophile in the catalytic mechanism. Glutamate 73 (proton donor) is an active-site residue.

It belongs to the N(4)-acetylcytidine amidohydrolase family.

It carries out the reaction N(4)-acetylcytidine + H2O = cytidine + acetate + H(+). The catalysed reaction is N(4)-acetyl-2'-deoxycytidine + H2O = 2'-deoxycytidine + acetate + H(+). The enzyme catalyses N(4)-acetylcytosine + H2O = cytosine + acetate + H(+). Functionally, catalyzes the hydrolysis of N(4)-acetylcytidine (ac4C). In Yersinia pseudotuberculosis serotype O:1b (strain IP 31758), this protein is N(4)-acetylcytidine amidohydrolase.